Reading from the N-terminus, the 343-residue chain is Methionine import ATP-binding protein MetN 1 (343 aa).

The 240-residue stretch at 2–241 folds into the ABC transporter domain; it reads IKLSNITKVF…PKTPLAQKFI (240 aa). Residue 38–45 coordinates ATP; it reads GASGAGKS.

Belongs to the ABC transporter superfamily. Methionine importer (TC 3.A.1.24) family. In terms of assembly, the complex is composed of two ATP-binding proteins (MetN), two transmembrane proteins (MetI) and a solute-binding protein (MetQ).

It localises to the cell inner membrane. The enzyme catalyses L-methionine(out) + ATP + H2O = L-methionine(in) + ADP + phosphate + H(+). It carries out the reaction D-methionine(out) + ATP + H2O = D-methionine(in) + ADP + phosphate + H(+). Part of the ABC transporter complex MetNIQ involved in methionine import. Responsible for energy coupling to the transport system. This Salmonella typhi protein is Methionine import ATP-binding protein MetN 1.